Reading from the N-terminus, the 451-residue chain is Ammonium transporter Rh type B (451 aa).

At 1-11 (MADVSTSMRLK) the chain is on the cytoplasmic side. Residues 12–32 (LPVVCFILEIILIILFGALVQ) form a helical membrane-spanning segment. Residues 33–63 (YDYETDAKEWHNQSHNDYENDFYFRYPSFQD) are Extracellular-facing. The N-linked (GlcNAc...) asparagine glycan is linked to asparagine 44. A helical transmembrane segment spans residues 64–84 (VHVMIFIGFGFLMTFLQKYGF). Residues 85–87 (GSV) lie on the Cytoplasmic side of the membrane. The chain crosses the membrane as a helical span at residues 88-108 (GFNFLIAAFSLQWATLMQGFF). Residues 109 to 121 (HGMHGGKIHVGVE) are Extracellular-facing. The chain crosses the membrane as a helical span at residues 122–142 (SMINADFCTGSVLISFGAVLG). At 143 to 151 (KTSPIQLLT) the chain is on the cytoplasmic side. The helical transmembrane segment at 152 to 172 (MAMFEVTLFAVNEFILLSLLG) threads the bilayer. Over 173-176 (TRDA) the chain is Extracellular. Residues 177–197 (GGSMTIHTFGAYFGLMVTRIL) form a helical membrane-spanning segment. The Cytoplasmic portion of the chain corresponds to 198 to 216 (YRPHLDKSKHRNSSVYHSD). The helical transmembrane segment at 217–237 (LFAMIGTIYLWMFWPSFNSAI) threads the bilayer. Residues 238-247 (TAHGDDQHRT) lie on the Extracellular side of the membrane. The chain crosses the membrane as a helical span at residues 248–270 (ALNTYYSLAACTLATYGMSAVTS). Over 271-274 (HDGK) the chain is Cytoplasmic. A helical transmembrane segment spans residues 275–295 (LDMVHIQNAALAGGVAVGTAG). Residues 296-298 (EMM) are Extracellular-facing. The chain crosses the membrane as a helical span at residues 299-319 (LTPFGSMIVGFLAGIISVLGF). The Cytoplasmic segment spans residues 320-340 (KFLSPILESKLKIQDTCGVHN). A helical membrane pass occupies residues 341-361 (LHGMPGVLGAIVGAVTAALAT). Topologically, residues 362 to 390 (MDVYGKGMEDVFPAVADGSIDASKQGGVQ) are extracellular. The helical transmembrane segment at 391 to 411 (ALSLAITLGIALLGGLIVVFG) threads the bilayer. At 412–451 (TPPDTLCFEDGVYWEVPESEAPHEAQLTTVRTEETEKLSS) the chain is on the cytoplasmic side.

This sequence belongs to the ammonium transporter (TC 2.A.49) family. Rh subfamily.

The protein resides in the basolateral cell membrane. It is found in the cytoplasmic vesicle membrane. Its function is as follows. Functions as an ammonia transporter. May play a role in the elimination of ammonia in the gill. This Tetraodon nigroviridis (Spotted green pufferfish) protein is Ammonium transporter Rh type B (rhbg).